The following is a 510-amino-acid chain: Propionyl-CoA carboxylase beta chain (510 aa).

The region spanning 1–257 is the CoA carboxyltransferase N-terminal domain; that stretch reads MKDILEQLED…NNREKPPVRP (257 aa). Residues 1–504 are carboxyltransferase; sequence MKDILEQLED…NKSVQMPWKK (504 aa). The 244-residue stretch at 261–504 folds into the CoA carboxyltransferase C-terminal domain; sequence DPDRIEPSLD…NKSVQMPWKK (244 aa). The segment at 292-325 is acyl-CoA binding; it reads DEGDFYEIQEEFAKNIITGFIRLEGRTVGVVANQ.

This sequence belongs to the AccD/PCCB family. The holoenzyme is a dodecamer composed of 6 PccA/alpha subunits and 6 PccB/beta subunits.

The catalysed reaction is propanoyl-CoA + hydrogencarbonate + ATP = (S)-methylmalonyl-CoA + ADP + phosphate + H(+). It participates in metabolic intermediate metabolism; propanoyl-CoA degradation; succinyl-CoA from propanoyl-CoA: step 1/3. Functionally, this is one of the 2 subunits of the biotin-dependent propionyl-CoA carboxylase (PCC), the enzyme catalyzing the carboxylation of propionyl-CoA/propanoyl-CoA to D-methylmalonyl-CoA/(S)-methylmalonyl-CoA. Within the holoenzyme, the alpha subunit catalyzes the ATP-dependent carboxylation of the biotin carried by the biotin carboxyl carrier (BCC) domain, while the beta subunit then tranfers the carboxyl group from carboxylated biotin to propionyl-CoA. In Roseobacter denitrificans (strain ATCC 33942 / OCh 114) (Erythrobacter sp. (strain OCh 114)), this protein is Propionyl-CoA carboxylase beta chain.